Reading from the N-terminus, the 107-residue chain is Large ribosomal subunit protein uL24 (107 aa).

This sequence belongs to the universal ribosomal protein uL24 family. As to quaternary structure, part of the 50S ribosomal subunit.

In terms of biological role, one of two assembly initiator proteins, it binds directly to the 5'-end of the 23S rRNA, where it nucleates assembly of the 50S subunit. Its function is as follows. One of the proteins that surrounds the polypeptide exit tunnel on the outside of the subunit. The chain is Large ribosomal subunit protein uL24 from Natranaerobius thermophilus (strain ATCC BAA-1301 / DSM 18059 / JW/NM-WN-LF).